A 185-amino-acid chain; its full sequence is Large ribosomal subunit protein uL5 (185 aa).

It belongs to the universal ribosomal protein uL5 family. Part of the 50S ribosomal subunit; part of the 5S rRNA/L5/L18/L25 subcomplex. Contacts the 5S rRNA and the P site tRNA. Forms a bridge to the 30S subunit in the 70S ribosome.

In terms of biological role, this is one of the proteins that bind and probably mediate the attachment of the 5S RNA into the large ribosomal subunit, where it forms part of the central protuberance. In the 70S ribosome it contacts protein S13 of the 30S subunit (bridge B1b), connecting the 2 subunits; this bridge is implicated in subunit movement. Contacts the P site tRNA; the 5S rRNA and some of its associated proteins might help stabilize positioning of ribosome-bound tRNAs. The sequence is that of Large ribosomal subunit protein uL5 from Rhodopseudomonas palustris (strain BisB5).